We begin with the raw amino-acid sequence, 501 residues long: ATP synthase subunit alpha (501 aa).

169 to 176 (GDRQTGKT) contacts ATP.

This sequence belongs to the ATPase alpha/beta chains family. In terms of assembly, F-type ATPases have 2 components, CF(1) - the catalytic core - and CF(0) - the membrane proton channel. CF(1) has five subunits: alpha(3), beta(3), gamma(1), delta(1), epsilon(1). CF(0) has three main subunits: a(1), b(2) and c(9-12). The alpha and beta chains form an alternating ring which encloses part of the gamma chain. CF(1) is attached to CF(0) by a central stalk formed by the gamma and epsilon chains, while a peripheral stalk is formed by the delta and b chains.

The protein localises to the cell membrane. The catalysed reaction is ATP + H2O + 4 H(+)(in) = ADP + phosphate + 5 H(+)(out). Its function is as follows. Produces ATP from ADP in the presence of a proton gradient across the membrane. The alpha chain is a regulatory subunit. This chain is ATP synthase subunit alpha, found in Streptococcus gordonii (strain Challis / ATCC 35105 / BCRC 15272 / CH1 / DL1 / V288).